The primary structure comprises 332 residues: 2,3-diketo-L-gulonate reductase (332 aa).

H44 (proton donor) is an active-site residue. NAD(+) contacts are provided by residues 168–174 (ITMVDMS), 224–225 (WK), and 304–306 (GHE).

The protein belongs to the LDH2/MDH2 oxidoreductase family. DlgD subfamily. In terms of assembly, homodimer.

It is found in the cytoplasm. The enzyme catalyses 3-dehydro-L-gulonate + NAD(+) = 2,3-dioxo-L-gulonate + NADH + H(+). The catalysed reaction is 3-dehydro-L-gulonate + NADP(+) = 2,3-dioxo-L-gulonate + NADPH + H(+). Its function is as follows. Catalyzes the reduction of 2,3-diketo-L-gulonate in the presence of NADH, to form 3-keto-L-gulonate. In Escherichia coli O139:H28 (strain E24377A / ETEC), this protein is 2,3-diketo-L-gulonate reductase.